The primary structure comprises 1488 residues: Calmodulin binding protein PICBP (1488 aa).

Disordered regions lie at residues 1–31, 63–112, 280–329, and 378–414; these read MSNPMFPEKWEESSTSKSSRRVHKRRERKMW, TAES…SRIS, GPLG…GRSS, and HDHDDGKVDGTTSDGTVGDNEEVCREGSSGELREEDG. Residues 18 to 31 are compositionally biased toward basic residues; that stretch reads SSRRVHKRRERKMW. Over residues 76–86 the composition is skewed to basic and acidic residues; sequence DDSRTYSKSSD. Residues 98 to 107 show a composition bias toward basic residues; the sequence is SVKRRAKSKS. Residues 297 to 312 are compositionally biased toward acidic residues; it reads DNVDGDSDEEVFEEEV. 2 calmodulin-binding regions span residues 493–592 and 831–938; these read TFHM…SLIP and NSLK…DIVL. Disordered regions lie at residues 816–844 and 941–971; these read IPDSSSDEESVSESSNSLKEEKEHQGETK and HDTPKQTKNSDTPRNNDETKEGKPRVEEGCE. Basic and acidic residues-rich tracts occupy residues 833–844 and 954–971; these read LKEEKEHQGETK and RNNDETKEGKPRVEEGCE. Residues 1135–1229 are calmodulin-binding; sequence EKRVKGWNNV…SLLAQAFDTI (95 aa). Disordered regions lie at residues 1232-1252 and 1316-1340; these read QDMGSGSTPGSAASSRNISRQ and EKNQTLPEETRKEEEEEELKEDTSV. A compositionally biased stretch (low complexity) spans 1235 to 1252; sequence GSGSTPGSAASSRNISRQ. Positions 1316–1328 are enriched in basic and acidic residues; that stretch reads EKNQTLPEETRKE. A calmodulin-binding region spans residues 1379–1483; it reads RQKSETLQVS…QLLVQAFESL (105 aa).

Its function is as follows. Binds calmodulin in a calcium-dependent manner in vitro. May play a role in general plant defense including R gene-mediated responses. This chain is Calmodulin binding protein PICBP, found in Arabidopsis thaliana (Mouse-ear cress).